The primary structure comprises 657 residues: Glycogen debranching enzyme (657 aa).

Asp336 functions as the Nucleophile in the catalytic mechanism. The active-site Proton donor is Glu371. Residues 458–467 (NEANGEENRD) are compositionally biased toward basic and acidic residues. A disordered region spans residues 458 to 479 (NEANGEENRDGTNNNYSNNHGK).

It belongs to the glycosyl hydrolase 13 family.

The catalysed reaction is Hydrolysis of (1-&gt;6)-alpha-D-glucosidic linkages to branches with degrees of polymerization of three or four glucose residues in limit dextrin.. It participates in glycan degradation; glycogen degradation. Its function is as follows. Removes maltotriose and maltotetraose chains that are attached by 1,6-alpha-linkage to the limit dextrin main chain, generating a debranched limit dextrin. In Shigella sonnei (strain Ss046), this protein is Glycogen debranching enzyme.